The following is a 203-amino-acid chain: Small ribosomal subunit protein uS4 (203 aa).

The S4 RNA-binding domain occupies 93–156 (RRLDNVVYRL…MKVPAILEAV (64 aa)).

Belongs to the universal ribosomal protein uS4 family. Part of the 30S ribosomal subunit. Contacts protein S5. The interaction surface between S4 and S5 is involved in control of translational fidelity.

Its function is as follows. One of the primary rRNA binding proteins, it binds directly to 16S rRNA where it nucleates assembly of the body of the 30S subunit. With S5 and S12 plays an important role in translational accuracy. This Streptococcus agalactiae serotype Ia (strain ATCC 27591 / A909 / CDC SS700) protein is Small ribosomal subunit protein uS4.